The following is a 452-amino-acid chain: MAYRSCVVGFSSHSGCEVTPAGSSQPGTSGWGSCGLPGPGFSSRSLTSCRPAGVIPKVTVNPSLLVPLDLKVDPAVQQQKNQEKEEMKVLNDKFASLIGKVQALEQRNQLLETRWGFLQGQGSATFDLSHHYETFQGRLQEELRKVSQERGQLEASLLQVLEKVEEFRVRYEDEISKRTDLEFTFVQLKKDLDAECLRRTELETKLKGLQGFVELMRTVYEQELKDLTAQVKDVSVTVGLDSRCHIDLSGIVEEVKAQYDAIAARSLEEAEAYSRSQLEERAARSAEFGNSLQSSRCEIADLNVRIQKLRSQIVSVKSHCLKLEENIKVAEEQGELAFQDAKDKMAQLEAALQKAKQDMARQLREYQDLMNTKLALDIEIATYHKLMEGEESRMDLPSTTVVSAVQSRCRTTASKSGLSKTPSRKKKNRGGPVIKITEMSEKYLSQESEASE.

The tract at residues 1–82 (MAYRSCVVGF…DPAVQQQKNQ (82 aa)) is head. Residue Ser45 is modified to Phosphoserine. The tract at residues 82-118 (QEKEEMKVLNDKFASLIGKVQALEQRNQLLETRWGFL) is coil 1A. In terms of domain architecture, IF rod spans 83–394 (EKEEMKVLND…KLMEGEESRM (312 aa)). Residues 119–135 (QGQGSATFDLSHHYETF) form a linker 1 region. The segment at 136-227 (QGRLQEELRK…TVYEQELKDL (92 aa)) is coil 1B. Residues 228–251 (TAQVKDVSVTVGLDSRCHIDLSGI) are linker 12. Positions 252 to 390 (VEEVKAQYDA…ATYHKLMEGE (139 aa)) are coil 2. The tail stretch occupies residues 391-452 (ESRMDLPSTT…YLSQESEASE (62 aa)). 2 stretches are compositionally biased toward polar residues: residues 411 to 421 (TTASKSGLSKT) and 443 to 452 (YLSQESEASE). The interval 411 to 452 (TTASKSGLSKTPSRKKKNRGGPVIKITEMSEKYLSQESEASE) is disordered.

It belongs to the intermediate filament family. As to quaternary structure, heterotetramer of two type I and two type II keratins.

This Rattus norvegicus (Rat) protein is Keratin, type II cytoskeletal 80 (Krt80).